Reading from the N-terminus, the 622-residue chain is Low affinity potassium transport system protein Kup (622 aa).

12 consecutive transmembrane segments (helical) span residues 12-32 (ITLA…LYTL), 49-69 (VFGF…IKYL), 103-123 (VIMG…TPAI), 137-157 (PQLD…LFMI), 165-185 (VGKL…VLGL), 213-233 (VSFI…ALYA), 247-267 (WFTV…ALLL), 276-296 (PFFL…AALA), 337-357 (IYIP…IVSF), 363-383 (LAAA…ILST), 396-416 (FVAL…SANL), and 419-439 (LLSG…IMTT).

It belongs to the HAK/KUP transporter (TC 2.A.72) family.

The protein localises to the cell inner membrane. The enzyme catalyses K(+)(in) + H(+)(in) = K(+)(out) + H(+)(out). Responsible for the low-affinity transport of potassium into the cell. Likely operates as a K(+):H(+) symporter. The polypeptide is Low affinity potassium transport system protein Kup (Salmonella gallinarum (strain 287/91 / NCTC 13346)).